Consider the following 346-residue polypeptide: Annexin A1 (346 aa).

The residue at position 2 (alanine 2) is an N-acetylalanine. Position 5 is a phosphoserine; by TRPM7 (serine 5). Residue glutamine 19 forms an Isoglutamyl lysine isopeptide (Gln-Lys) (interchain with K-?) linkage. Position 21 is a phosphotyrosine; by EGFR (tyrosine 21). At serine 27 the chain carries Phosphoserine; by PKC. Residues serine 34 and serine 37 each carry the phosphoserine modification. Annexin repeat units lie at residues 42–113 (FNPS…AMLK), 114–185 (TPAQ…ALAK), 197–269 (DLAD…TIVK), and 273–344 (STPA…ALCG). The residue at position 58 (lysine 58) is an N6-acetyllysine. Positions 59, 60, 62, 97, 100, 105, 127, 129, 131, 132, and 134 each coordinate Ca(2+). The residue at position 136 (threonine 136) is a Phosphothreonine. 3 residues coordinate Ca(2+): aspartate 171, glycine 210, and arginine 213. Residue lysine 214 forms a Glycyl lysine isopeptide (Lys-Gly) (interchain with G-Cter in SUMO1); alternate linkage. Residue lysine 214 forms a Glycyl lysine isopeptide (Lys-Gly) (interchain with G-Cter in SUMO2); alternate linkage. Residues glycine 215, aspartate 253, glutamate 255, and leucine 256 each coordinate Ca(2+). Residue lysine 257 forms a Glycyl lysine isopeptide (Lys-Gly) (interchain with G-Cter in SUMO1) linkage. Residues glutamate 261, methionine 286, glycine 288, and glycine 290 each coordinate Ca(2+). At lysine 312 the chain carries N6-acetyllysine. Cysteines 324 and 343 form a disulfide. Ca(2+) is bound by residues leucine 328, glutamate 330, and threonine 331. Lysine 332 is covalently cross-linked (Glycyl lysine isopeptide (Lys-Gly) (interchain with G-Cter in SUMO1)). Residue glutamate 336 participates in Ca(2+) binding.

This sequence belongs to the annexin family. In terms of assembly, homodimer; non-covalently linked. Homodimer; linked by transglutamylation. Homodimers linked by transglutamylation are observed in placenta, but not in other tissues. Interacts with S100A11. Heterotetramer, formed by two molecules each of S100A11 and ANXA1. Interacts with DYSF. Interacts with EGFR. Post-translationally, phosphorylated by protein kinase C, EGFR and TRPM7. Phosphorylated in response to EGF treatment. In terms of processing, sumoylated. Proteolytically cleaved by cathepsin CTSG to release the active N-terminal peptide Ac2-26. In terms of tissue distribution, detected in eosinophils. Detected in lung, placenta, spleen and thymus (at protein level).

Its subcellular location is the nucleus. It localises to the cytoplasm. The protein localises to the cell projection. The protein resides in the cilium. It is found in the basolateral cell membrane. Its subcellular location is the lateral cell membrane. It localises to the cell membrane. The protein localises to the apical cell membrane. The protein resides in the membrane. It is found in the endosome membrane. Its subcellular location is the secreted. It localises to the extracellular space. The protein localises to the early endosome. The protein resides in the cytoplasmic vesicle membrane. It is found in the extracellular exosome. Its subcellular location is the cytoplasmic vesicle. It localises to the secretory vesicle lumen. The protein localises to the phagocytic cup. In terms of biological role, plays important roles in the innate immune response as effector of glucocorticoid-mediated responses and regulator of the inflammatory process. Has anti-inflammatory activity. Plays a role in glucocorticoid-mediated down-regulation of the early phase of the inflammatory response. Contributes to the adaptive immune response by enhancing signaling cascades that are triggered by T-cell activation, regulates differentiation and proliferation of activated T-cells. Promotes the differentiation of T-cells into Th1 cells and negatively regulates differentiation into Th2 cells. Has no effect on unstimulated T-cells. Negatively regulates hormone exocytosis via activation of the formyl peptide receptors and reorganization of the actin cytoskeleton. Has high affinity for Ca(2+) and can bind up to eight Ca(2+) ions. Displays Ca(2+)-dependent binding to phospholipid membranes. Plays a role in the formation of phagocytic cups and phagosomes. Plays a role in phagocytosis by mediating the Ca(2+)-dependent interaction between phagosomes and the actin cytoskeleton. Functionally, functions at least in part by activating the formyl peptide receptors and downstream signaling cascades. Promotes chemotaxis of granulocytes and monocytes via activation of the formyl peptide receptors. Promotes rearrangement of the actin cytoskeleton, cell polarization and cell migration. Promotes resolution of inflammation and wound healing. Acts via neutrophil N-formyl peptide receptors to enhance the release of CXCL2. This Rattus norvegicus (Rat) protein is Annexin A1 (Anxa1).